The following is a 55-amino-acid chain: Ferredoxin (55 aa).

2 consecutive 4Fe-4S ferredoxin-type domains span residues 2–27 (HIITDECISCGACAAECPVEAIHEGT) and 28–55 (GKYEVDADTCIDCGACEAVCPTGAVKAE). The [4Fe-4S] cluster site is built by cysteine 8, cysteine 11, cysteine 14, cysteine 18, cysteine 37, cysteine 40, cysteine 43, and cysteine 47.

[4Fe-4S] cluster is required as a cofactor.

Its function is as follows. Ferredoxins are iron-sulfur proteins that transfer electrons in a wide variety of metabolic reactions. This Thermoanaerobacterium thermosaccharolyticum (Clostridium thermosaccharolyticum) protein is Ferredoxin.